The primary structure comprises 311 residues: Putative tenascin-XA (311 aa).

2 disordered regions span residues 1–47 and 124–150; these read MEDK…EPRL and LSAE…SQLS. 3 consecutive Fibronectin type-III domains span residues 41–135, 145–249, and 250–311; these read PPEE…LAPA, RLSQ…SPRD, and LQFS…SCVH.

In terms of tissue distribution, expressed in the adrenal gland.

In Homo sapiens (Human), this protein is Putative tenascin-XA (TNXA).